Here is a 421-residue protein sequence, read N- to C-terminus: Signal recognition particle receptor FtsY (421 aa).

The segment covering 1 to 10 has biased composition (basic residues); it reads MFSFFRRKKK. The tract at residues 1–31 is disordered; the sequence is MFSFFRRKKKQETPALEEAQIQETAAKAESE. Residues 228–235, 309–313, and 373–376 contribute to the GTP site; these read GINGAGKT, DTAGR, and TKLD.

This sequence belongs to the GTP-binding SRP family. FtsY subfamily. Part of the signal recognition particle protein translocation system, which is composed of SRP and FtsY. SRP is a ribonucleoprotein composed of Ffh and a 4.5S RNA molecule.

The protein localises to the cell inner membrane. Its subcellular location is the cytoplasm. It carries out the reaction GTP + H2O = GDP + phosphate + H(+). Its function is as follows. Involved in targeting and insertion of nascent membrane proteins into the cytoplasmic membrane. Acts as a receptor for the complex formed by the signal recognition particle (SRP) and the ribosome-nascent chain (RNC). Interaction with SRP-RNC leads to the transfer of the RNC complex to the Sec translocase for insertion into the membrane, the hydrolysis of GTP by both Ffh and FtsY, and the dissociation of the SRP-FtsY complex into the individual components. In Neisseria meningitidis serogroup A / serotype 4A (strain DSM 15465 / Z2491), this protein is Signal recognition particle receptor FtsY.